The primary structure comprises 1401 residues: Kinesin-like protein KIF27 (1401 aa).

The Kinesin motor domain occupies 5-341 (PVKVAVRIRP…LKYANRARNI (337 aa)). Residue 84 to 91 (GQTGSGKT) participates in ATP binding. Coiled coils occupy residues 352–413 (ESDR…GYQC) and 489–557 (LAAD…KLNL). 5 positions are modified to phosphoserine: Ser-643, Ser-646, Ser-672, Ser-675, and Ser-704. The disordered stretch occupies residues 643–662 (SDNSDDEESEGQEKSGTRCR). Coiled-coil stretches lie at residues 705-886 (QELN…IQLK), 916-1070 (DHLQ…AAIE), 1118-1154 (NKVVNLREAERKQQLYNEEMKMKVLERDNMVRELESA), and 1190-1219 (EGIMETFKTYEDKIQQLEKDLYFYKKTSRD). Ser-999 carries the phosphoserine modification. The span at 1259–1280 (EELKWASRPESMKLSGREREMD) shows a compositional bias: basic and acidic residues. The segment at 1259–1332 (EELKWASRPE…TETDDNQFTK (74 aa)) is disordered. The segment covering 1281–1292 (SSASSLRTQPNP) has biased composition (polar residues). Residues Ser-1367 and Ser-1389 each carry the phosphoserine modification.

It belongs to the TRAFAC class myosin-kinesin ATPase superfamily. Kinesin family. KIF27 subfamily. In terms of assembly, interacts with STK36. Testis, pancreatic islet, germ cell tumors and Jurkat T-cells.

The protein resides in the cytoplasm. Its subcellular location is the cytoskeleton. It localises to the cell projection. The protein localises to the cilium. Plays an essential role in motile ciliogenesis. This Homo sapiens (Human) protein is Kinesin-like protein KIF27 (KIF27).